A 270-amino-acid chain; its full sequence is Acyl-[acyl-carrier-protein]--UDP-N-acetylglucosamine O-acyltransferase (270 aa).

Belongs to the transferase hexapeptide repeat family. LpxA subfamily. Homotrimer.

It localises to the cytoplasm. It catalyses the reaction a (3R)-hydroxyacyl-[ACP] + UDP-N-acetyl-alpha-D-glucosamine = a UDP-3-O-[(3R)-3-hydroxyacyl]-N-acetyl-alpha-D-glucosamine + holo-[ACP]. Its pathway is glycolipid biosynthesis; lipid IV(A) biosynthesis; lipid IV(A) from (3R)-3-hydroxytetradecanoyl-[acyl-carrier-protein] and UDP-N-acetyl-alpha-D-glucosamine: step 1/6. Involved in the biosynthesis of lipid A, a phosphorylated glycolipid that anchors the lipopolysaccharide to the outer membrane of the cell. This Helicobacter pylori (strain G27) protein is Acyl-[acyl-carrier-protein]--UDP-N-acetylglucosamine O-acyltransferase.